A 247-amino-acid polypeptide reads, in one-letter code: (7aS)-7a-methyl-1,5-dioxo-2,3,5,6,7,7a-hexahydro-1H-indene-carboxyl-CoA hydrolase (247 aa).

This sequence belongs to the enoyl-CoA hydratase/isomerase family.

The enzyme catalyses (7aS)-7a-methyl-1,5-dioxo-2,3,5,6,7,7a-hexahydro-1H-indene-carboxyl-CoA + H2O = (3E)-2-(2-carboxylatoethyl)-3-methyl-6-oxocyclohex-1-ene-1-carboxyl-CoA + H(+). It functions in the pathway steroid metabolism; cholesterol degradation. Its function is as follows. Involved in the final steps of cholesterol and steroid degradation. Catalyzes the hydrolytic ring D opening of (7aS)-7a-methyl-1,5-dioxo-2,3,5,6,7,7a-hexahydro-1H-indene-carboxyl-CoA (HIEC-CoA) to (3E)-2-(2-carboxylatoethyl)-3-methyl-6-oxocyclohex-1-ene-1-carboxyl-CoA (COCHEA-CoA). In Mycobacterium tuberculosis (strain ATCC 25618 / H37Rv), this protein is (7aS)-7a-methyl-1,5-dioxo-2,3,5,6,7,7a-hexahydro-1H-indene-carboxyl-CoA hydrolase.